Consider the following 366-residue polypeptide: Putative [LysW]-aminoadipate semialdehyde/glutamate semialdehyde transaminase (366 aa).

Pyridoxal 5'-phosphate-binding positions include 90–91 (GT) and phenylalanine 117. Arginine 120 is a binding site for substrate. Residue 202–205 (DEVQ) coordinates pyridoxal 5'-phosphate. An N6-(pyridoxal phosphate)lysine modification is found at lysine 230. Serine 254 is a substrate binding site. Threonine 255 lines the pyridoxal 5'-phosphate pocket.

The protein belongs to the class-III pyridoxal-phosphate-dependent aminotransferase family. LysJ subfamily. In terms of assembly, homodimer. Pyridoxal 5'-phosphate serves as cofactor.

It is found in the cytoplasm. The catalysed reaction is [amino-group carrier protein]-C-terminal-gamma-(L-lysyl)-L-glutamate + 2-oxoglutarate = [amino-group carrier protein]-C-terminal-N-(1-carboxy-5-oxopentan-1-yl)-L-glutamine + L-glutamate. The enzyme catalyses [amino-group carrier protein]-C-terminal-gamma-(L-ornithyl)-L-glutamate + 2-oxoglutarate = [amino-group carrier protein]-C-terminal-gamma-(L-glutamyl-5-semialdehyde)-L-glutamate + L-glutamate. Its pathway is amino-acid biosynthesis; L-lysine biosynthesis via AAA pathway; L-lysine from L-alpha-aminoadipate (Thermus route): step 4/5. It functions in the pathway amino-acid biosynthesis; L-arginine biosynthesis. In terms of biological role, involved in both the arginine and lysine biosynthetic pathways. The polypeptide is Putative [LysW]-aminoadipate semialdehyde/glutamate semialdehyde transaminase (Pyrococcus horikoshii (strain ATCC 700860 / DSM 12428 / JCM 9974 / NBRC 100139 / OT-3)).